Consider the following 457-residue polypeptide: Serine--tRNA ligase (457 aa).

252 to 254 lines the L-serine pocket; the sequence is TAE. ATP is bound by residues 283–285 and V299; that span reads RKE. E306 contributes to the L-serine binding site. Position 370–373 (370–373) interacts with ATP; that stretch reads EMVS. T406 provides a ligand contact to L-serine.

Belongs to the class-II aminoacyl-tRNA synthetase family. Type-1 seryl-tRNA synthetase subfamily. As to quaternary structure, homodimer. The tRNA molecule binds across the dimer.

Its subcellular location is the cytoplasm. It catalyses the reaction tRNA(Ser) + L-serine + ATP = L-seryl-tRNA(Ser) + AMP + diphosphate + H(+). The enzyme catalyses tRNA(Sec) + L-serine + ATP = L-seryl-tRNA(Sec) + AMP + diphosphate + H(+). Its pathway is aminoacyl-tRNA biosynthesis; selenocysteinyl-tRNA(Sec) biosynthesis; L-seryl-tRNA(Sec) from L-serine and tRNA(Sec): step 1/1. Catalyzes the attachment of serine to tRNA(Ser). Is also able to aminoacylate tRNA(Sec) with serine, to form the misacylated tRNA L-seryl-tRNA(Sec), which will be further converted into selenocysteinyl-tRNA(Sec). The polypeptide is Serine--tRNA ligase (Saccharolobus islandicus (strain Y.G.57.14 / Yellowstone #1) (Sulfolobus islandicus)).